Reading from the N-terminus, the 611-residue chain is Inhibitor of apoptosis protein (611 aa).

BIR repeat units follow at residues 30-97, 176-242, and 262-329; these read ELYR…CSFV, EEAR…CPFV, and HEAR…CEYL. The Zn(2+) site is built by Cys-299, Cys-302, His-319, and Cys-326. The region spanning 446 to 536 is the CARD domain; that stretch reads VASDDLSLIR…VLYKDLFVEK (91 aa). The RING-type zinc finger occupies 564 to 599; it reads CKVCMDKEVSIVFIPCGHLVVCKECAPSLRKCPICR.

Belongs to the IAP family. Cells of the T-lymphocyte lineage. Found in both cortical and medullary cells of the thymus. Expressed at relatively high levels also in spleen, bursa, intestine and lung and at very low levels in testis, brain and skeletal muscle.

It is found in the nucleus. It localises to the cytoplasm. In terms of biological role, apoptotic suppressor. The chain is Inhibitor of apoptosis protein (ITA) from Gallus gallus (Chicken).